Here is a 264-residue protein sequence, read N- to C-terminus: Taurine import ATP-binding protein TauB (264 aa).

The ABC transporter domain maps to 4 to 233 (LQLERISAQY…RYAAGESARA (230 aa)). 38 to 45 (GPSGSGKT) contributes to the ATP binding site.

This sequence belongs to the ABC transporter superfamily. Taurine importer (TC 3.A.1.17.1) family. As to quaternary structure, the complex is composed of two ATP-binding proteins (TauB), two transmembrane proteins (TauC) and a solute-binding protein (TauA).

The protein resides in the cell inner membrane. The enzyme catalyses taurine(out) + ATP + H2O = taurine(in) + ADP + phosphate + H(+). Functionally, part of the ABC transporter complex TauABC involved in taurine import. Responsible for energy coupling to the transport system. The protein is Taurine import ATP-binding protein TauB of Pseudomonas fluorescens (strain ATCC BAA-477 / NRRL B-23932 / Pf-5).